A 588-amino-acid chain; its full sequence is Hyaluronan synthase 1 (588 aa).

At 1-28 (MKEKAAETMEIPEGIPKDLEPKHPTLWR) the chain is on the cytoplasmic side. The helical transmembrane segment at 29–49 (IIYYSFGVVLLATITAAYVAE) threads the bilayer. The Extracellular portion of the chain corresponds to 50–61 (FQVLKHEAILFS). A helical membrane pass occupies residues 62-82 (LGLYGLAMLLHLMMQSLFAFL). Residues 83-411 (EIRRVNKSEL…IWMTYESVVS (329 aa)) are Cytoplasmic-facing. A helical membrane pass occupies residues 412–432 (FIFPFFITATVIRLIYAGTIW). Residue asparagine 433 is a topological domain, extracellular. Residues 434–454 (VVWLLLCIQIMSLFKSIYACW) form a helical membrane-spanning segment. The Cytoplasmic segment spans residues 455-456 (LR). The chain crosses the membrane as a helical span at residues 457-477 (GNFIMLLMSLYSMLYMTGLLP). Residues 478 to 505 (SKYFALLTLNKTGWGTSGRKKIVGNYMP) are Extracellular-facing. A helical membrane pass occupies residues 506–526 (ILPLSIWAAVLCGGVGYSIYM). At 527–543 (DCQNDWSTPEKQKEMYH) the chain is on the cytoplasmic side. Residues 544–564 (LLYGCVGYVMYWVIMAVMYWV) form a helical membrane-spanning segment. The Extracellular portion of the chain corresponds to 565-588 (WVKRCCRKRSQTVTLVHDIPDMCV).

Belongs to the NodC/HAS family. Mg(2+) is required as a cofactor. In terms of tissue distribution, expression moves as a gradient through the embryo. The mRNA is first expressed in the animal region of the blastula, and by early gastrula is found everywhere except in the outer layer of the dorsal blastopore lip. By mid-gastrula, protein is present in the inner ectodermal layer and the endoderm, then disappears from dorsal ectoderm as the neural plate is induced and later decays in a dorsoventral direction. Last expressed in ventral regions of the gut at the tailbud stage (at protein level).

The protein localises to the membrane. The enzyme catalyses [hyaluronan](n) + UDP-N-acetyl-alpha-D-glucosamine = N-acetyl-beta-D-glucosaminyl-(1-&gt;4)-[hyaluronan](n) + UDP + H(+). The catalysed reaction is N-acetyl-beta-D-glucosaminyl-(1-&gt;4)-[hyaluronan](n) + UDP-alpha-D-glucuronate = [hyaluronan](n+1) + UDP + H(+). Its pathway is glycan biosynthesis; hyaluronan biosynthesis. Its function is as follows. Catalyzes the addition of GlcNAc or GlcUA monosaccharides to the nascent hyaluronan polymer. Therefore, it is essential to hyaluronan synthesis a major component of most extracellular matrices that has a structural role in tissues architectures and regulates cell adhesion, migration and differentiation. Also able to catalyze the synthesis of chito-oligosaccharide depending on the substrate. This chain is Hyaluronan synthase 1 (has1), found in Xenopus laevis (African clawed frog).